The primary structure comprises 105 residues: Large ribosomal subunit protein uL24 (105 aa).

It belongs to the universal ribosomal protein uL24 family. In terms of assembly, part of the 50S ribosomal subunit.

One of two assembly initiator proteins, it binds directly to the 5'-end of the 23S rRNA, where it nucleates assembly of the 50S subunit. Functionally, one of the proteins that surrounds the polypeptide exit tunnel on the outside of the subunit. In Thermotoga maritima (strain ATCC 43589 / DSM 3109 / JCM 10099 / NBRC 100826 / MSB8), this protein is Large ribosomal subunit protein uL24.